A 1400-amino-acid polypeptide reads, in one-letter code: DNA-directed RNA polymerase subunit beta' (1400 aa).

Residues cysteine 71, cysteine 73, cysteine 86, and cysteine 89 each coordinate Zn(2+). The Mg(2+) site is built by aspartate 462, aspartate 464, and aspartate 466. Residues cysteine 811, cysteine 885, cysteine 892, and cysteine 895 each coordinate Zn(2+).

It belongs to the RNA polymerase beta' chain family. In terms of assembly, the RNAP catalytic core consists of 2 alpha, 1 beta, 1 beta' and 1 omega subunit. When a sigma factor is associated with the core the holoenzyme is formed, which can initiate transcription. The cofactor is Mg(2+). Requires Zn(2+) as cofactor.

The catalysed reaction is RNA(n) + a ribonucleoside 5'-triphosphate = RNA(n+1) + diphosphate. In terms of biological role, DNA-dependent RNA polymerase catalyzes the transcription of DNA into RNA using the four ribonucleoside triphosphates as substrates. This chain is DNA-directed RNA polymerase subunit beta', found in Brucella canis (strain ATCC 23365 / NCTC 10854 / RM-666).